We begin with the raw amino-acid sequence, 263 residues long: Renal glandular kallikrein (263 aa).

The first 18 residues, 1 to 18, serve as a signal peptide directing secretion; sequence MWFLILFLALFLGGIDAA. A propeptide spans 19 to 24 (activation peptide); the sequence is PPVQSR. One can recognise a Peptidase S1 domain in the interval 25–260; the sequence is IIGGFNCEKN…YRSWIKDVMA (236 aa). 5 disulfides stabilise this stretch: Cys31/Cys175, Cys50/Cys66, Cys153/Cys221, Cys186/Cys200, and Cys211/Cys236. The active-site Charge relay system is the His65. A glycan (N-linked (GlcNAc...) asparagine) is linked at Asn102. Asp121 (charge relay system) is an active-site residue. The active-site Charge relay system is Ser215.

It belongs to the peptidase S1 family. Kallikrein subfamily.

It catalyses the reaction Preferential cleavage of Arg-|-Xaa bonds in small molecule substrates. Highly selective action to release kallidin (lysyl-bradykinin) from kininogen involves hydrolysis of Met-|-Xaa or Leu-|-Xaa.. In terms of biological role, glandular kallikreins cleave Met-Lys and Arg-Ser bonds in kininogen to release Lys-bradykinin. This is Renal glandular kallikrein from Mastomys natalensis (African soft-furred rat).